We begin with the raw amino-acid sequence, 431 residues long: Protein PIN-LIKES 6 (431 aa).

The Lumenal segment spans residues 1-29 (MIARILAALADSMEMPVAAGGGSVLGTIK). The helical transmembrane segment at 30 to 50 (IAVMPIAKVFTMCFLGLLMAS) threads the bilayer. The Cytoplasmic segment spans residues 51–66 (KYVNILPPSGRKLLNG). Residues 67–87 (LVFSLLLPCLIFSQLGQAVTL) traverse the membrane as a helical segment. Over 88–93 (QKMLQW) the chain is Lumenal. Residues 94–114 (WFIPVNVVLGTISGSIIGFIV) traverse the membrane as a helical segment. The Cytoplasmic segment spans residues 115 to 128 (ASIVRPPYPYFKFT). A helical membrane pass occupies residues 129-149 (IIQIGVGNIGNVPLVLLAALC). The Lumenal portion of the chain corresponds to 150–169 (RDTSNPFGDSEKCSIDGTAY). Residues 170 to 190 (ISFGQWVGAIILYTYVYQMFA) traverse the membrane as a helical segment. Residues 191–268 (PPPEGFDAEE…FLYEKLKLKQ (78 aa)) lie on the Cytoplasmic side of the membrane. A helical transmembrane segment spans residues 269 to 289 (IVQPAIVASILAMILGAIPFT). The Lumenal portion of the chain corresponds to 290–306 (KKLIFTNGAPLFFFTDS). A helical transmembrane segment spans residues 307 to 327 (CMILGDAMIPCILLALGGNLI). Topologically, residues 328–340 (NGPGSSKLGFKTT) are cytoplasmic. The chain crosses the membrane as a helical span at residues 341–361 (AAIIIGRLVLVPPVGLGIVTV). Residues 362–376 (ADKLGFLPADDKMFR) lie on the Lumenal side of the membrane. The helical transmembrane segment at 377-397 (FVLLLQHTMPTSVLSGAVANL) threads the bilayer. Residues 398 to 406 (RGCGRESAA) lie on the Cytoplasmic side of the membrane. Residues 407-427 (VLFWVHIFAIFSMAGWMVLYI) traverse the membrane as a helical segment. Topologically, residues 428 to 431 (NILF) are lumenal.

The protein belongs to the auxin efflux carrier (TC 2.A.69.2) family. Expressed in seedlings, rosette and cauline leaves, stems and flowers.

Its subcellular location is the endoplasmic reticulum membrane. Involved in cellular auxin homeostasis by regulating auxin metabolism. Regulates intracellular auxin accumulation at the endoplasmic reticulum and thus auxin availability for nuclear auxin signaling. This chain is Protein PIN-LIKES 6, found in Arabidopsis thaliana (Mouse-ear cress).